The following is a 394-amino-acid chain: Actin-related protein 2-B (394 aa).

ATP is bound by residues 160–162 (GDG), 214–218 (RMMKE), and 305–310 (GGSTMY).

This sequence belongs to the actin family. ARP2 subfamily. As to quaternary structure, component of the Arp2/3 complex composed of actr2/arp2, actr3/arp3, arpc1b, arpc2, arpc3, arpc4 and arpc5.

The protein resides in the cytoplasm. Its subcellular location is the cytoskeleton. It is found in the cell projection. It localises to the nucleus. Its function is as follows. ATP-binding component of the Arp2/3 complex, a multiprotein complex that mediates actin polymerization upon stimulation by nucleation-promoting factor (NPF). The Arp2/3 complex mediates the formation of branched actin networks in the cytoplasm, providing the force for cell motility. Seems to contact the pointed end of the daughter actin filament. In addition to its role in the cytoplasmic cytoskeleton, the Arp2/3 complex also promotes actin polymerization in the nucleus, thereby regulating gene transcription and repair of damaged DNA. The Arp2/3 complex promotes homologous recombination (HR) repair in response to DNA damage by promoting nuclear actin polymerization, leading to drive motility of double-strand breaks (DSBs). This chain is Actin-related protein 2-B (actr2b), found in Danio rerio (Zebrafish).